The following is a 183-amino-acid chain: Capsid protein (183 aa).

The disordered stretch occupies residues 136–183 (NAPILSTLPETTVVRRRGRSPRRRTPSPRRRRSQSPRRRRSQSRESQC). The span at 149–176 (VRRRGRSPRRRTPSPRRRRSQSPRRRRS) shows a compositional bias: basic residues. Phosphoserine; by host occurs at positions 155, 162, and 170. Residues 155-161 (SPRRRTP) form a 1; half-length repeat. Positions 155–177 (SPRRRTPSPRRRRSQSPRRRRSQ) are 3 X 8 AA repeats of S-P-R-R-R-[PR]-S-Q. The Bipartite nuclear localization signal signature appears at 158–175 (RRTPSPRRRRSQSPRRRR). A run of 2 repeats spans residues 162 to 169 (SPRRRRSQ) and 170 to 177 (SPRRRRSQ). Residues 177–183 (QSRESQC) are RNA binding.

The protein belongs to the orthohepadnavirus core antigen family. As to quaternary structure, homodimerizes, then multimerizes. Interacts with cytosol exposed regions of viral L glycoprotein present in the reticulum-to-Golgi compartment. Interacts with human FLNB. Phosphorylated form interacts with host importin alpha; this interaction depends on the exposure of the NLS, which itself depends upon genome maturation and/or phosphorylation of the capsid protein. Interacts with host NUP153. In terms of processing, phosphorylated by host SRPK1, SRPK2, and maybe protein kinase C or GAPDH. Phosphorylation is critical for pregenomic RNA packaging. Protein kinase C phosphorylation is stimulated by HBx protein and may play a role in transport of the viral genome to the nucleus at the late step during the viral replication cycle.

The protein resides in the virion. The protein localises to the host cytoplasm. Its function is as follows. Self assembles to form an icosahedral capsid. Most capsids appear to be large particles with an icosahedral symmetry of T=4 and consist of 240 copies of capsid protein, though a fraction forms smaller T=3 particles consisting of 180 capsid proteins. Entering capsids are transported along microtubules to the nucleus. Phosphorylation of the capsid is thought to induce exposure of nuclear localization signal in the C-terminal portion of the capsid protein that allows binding to the nuclear pore complex via the importin (karyopherin-) alpha and beta. Capsids are imported in intact form through the nuclear pore into the nuclear basket, where it probably binds NUP153. Only capsids that contain the mature viral genome can release the viral DNA and capsid protein into the nucleoplasm. Immature capsids get stuck in the basket. Capsids encapsulate the pre-genomic RNA and the P protein. Pre-genomic RNA is reverse-transcribed into DNA while the capsid is still in the cytoplasm. The capsid can then either be directed to the nucleus, providing more genomes for transcription, or bud through the endoplasmic reticulum to provide new virions. This is Capsid protein from Hepatitis B virus genotype B/C subtype adw (isolate Okinawa/pODW282/1998) (HBV-B).